We begin with the raw amino-acid sequence, 417 residues long: Ribulose bisphosphate carboxylase large chain (417 aa).

2 residues coordinate substrate: Asn103 and Thr153. Lys155 (proton acceptor) is an active-site residue. Residue Lys157 coordinates substrate. Residues Lys181, Asp183, and Glu184 each contribute to the Mg(2+) site. At Lys181 the chain carries N6-carboxylysine. His274 (proton acceptor) is an active-site residue. Residues Arg275, His307, and Ser359 each contribute to the substrate site.

It belongs to the RuBisCO large chain family. Type I subfamily. In terms of assembly, heterohexadecamer of 8 large chains and 8 small chains. It depends on Mg(2+) as a cofactor.

Its subcellular location is the plastid. It is found in the chloroplast. It carries out the reaction 2 (2R)-3-phosphoglycerate + 2 H(+) = D-ribulose 1,5-bisphosphate + CO2 + H2O. The enzyme catalyses D-ribulose 1,5-bisphosphate + O2 = 2-phosphoglycolate + (2R)-3-phosphoglycerate + 2 H(+). Functionally, ruBisCO catalyzes two reactions: the carboxylation of D-ribulose 1,5-bisphosphate, the primary event in carbon dioxide fixation, as well as the oxidative fragmentation of the pentose substrate in the photorespiration process. Both reactions occur simultaneously and in competition at the same active site. The polypeptide is Ribulose bisphosphate carboxylase large chain (Acrostichum aureum (Golden leather fern)).